The sequence spans 167 residues: NADH-ubiquinone oxidoreductase chain 6 (167 aa).

The next 4 membrane-spanning stretches (helical) occupy residues 21–41 (SPYYGALATAWLALLAALLLL), 45–65 (IIFPAIILMLIYLGGMLVVFI), 78–98 (PINLTMSALMASFGVMLITMI), and 132–152 (SMFIVAVMILTALLFSILEVV).

The protein belongs to the complex I subunit 6 family.

The protein resides in the mitochondrion membrane. The catalysed reaction is a ubiquinone + NADH + 5 H(+)(in) = a ubiquinol + NAD(+) + 4 H(+)(out). Functionally, core subunit of the mitochondrial membrane respiratory chain NADH dehydrogenase (Complex I) that is believed to belong to the minimal assembly required for catalysis. Complex I functions in the transfer of electrons from NADH to the respiratory chain. The immediate electron acceptor for the enzyme is believed to be ubiquinone. The protein is NADH-ubiquinone oxidoreductase chain 6 (ND6) of Branchiostoma floridae (Florida lancelet).